The chain runs to 448 residues: Keratin, type I cytoskeletal 27 (448 aa).

Positions 1–73 (MSVRFSSASR…ANEHGLLSGN (73 aa)) are head. Residues 74 to 109 (EKVTMQNLNDRLASYLENVQALEEANADLEQKIKDW) are coil 1A. In terms of domain architecture, IF rod spans 74–389 (EKVTMQNLND…RLIDGDEGSC (316 aa)). Positions 110 to 131 (YEKFGPGSCRGLDHDYSRYFPI) are linker 1. The segment at 132–223 (IDDLRTQIIS…KNHEEEMQAL (92 aa)) is coil 1B. The tract at residues 224–246 (QCAAGGNVNVEMNAAPGVDLTVL) is linker 12. Positions 247-385 (LNNMRAEYEA…ETYCRLIDGD (139 aa)) are coil 2. The segment at 386 to 448 (EGSCVKAKGQ…VNKTEQRIPS (63 aa)) is tail. The disordered stretch occupies residues 427-448 (SRVHTLEEKSTKVNKTEQRIPS). The segment covering 430–448 (HTLEEKSTKVNKTEQRIPS) has biased composition (basic and acidic residues).

This sequence belongs to the intermediate filament family. In terms of assembly, heterotetramer of two type I and two type II keratins. Interacts with KRT6A to form filaments. Expressed in skin. Expressed in the Henle layer and cuticle of the irs in hair follicle bulb. In the hair follicle, expression was observed in all layers of the irs but was stronger in the Henle layer and cuticle than the Huxley layer until the Henle layer differentiated (at protein level).

The protein localises to the cytoplasm. Essential for the proper assembly of type I and type II keratin protein complexes and formation of keratin intermediate filaments in the inner root sheath (irs). The polypeptide is Keratin, type I cytoskeletal 27 (Mus musculus (Mouse)).